The following is a 179-amino-acid chain: Segregation and condensation protein B (179 aa).

Belongs to the ScpB family. Homodimer. Homodimerization may be required to stabilize the binding of ScpA to the Smc head domains. Component of a cohesin-like complex composed of ScpA, ScpB and the Smc homodimer, in which ScpA and ScpB bind to the head domain of Smc. The presence of the three proteins is required for the association of the complex with DNA.

It is found in the cytoplasm. In terms of biological role, participates in chromosomal partition during cell division. May act via the formation of a condensin-like complex containing Smc and ScpA that pull DNA away from mid-cell into both cell halves. This chain is Segregation and condensation protein B, found in Clostridioides difficile (strain 630) (Peptoclostridium difficile).